The following is a 194-amino-acid chain: Large ribosomal subunit protein bL9 (194 aa).

This sequence belongs to the bacterial ribosomal protein bL9 family.

Binds to the 23S rRNA. The polypeptide is Large ribosomal subunit protein bL9 (Rhodopseudomonas palustris (strain BisA53)).